We begin with the raw amino-acid sequence, 352 residues long: MALIHKRQALNSRGVDWSELPEDVIRLVLRRLRLSDFHRARAVCSTWCRVWGDCVSKPNQVPWLILFPDPAQIRRSCMLYNPQEEENVYTIQDLGVDPCLASCGTWLLALFSVLYRKGHFASKAEMMGYPSTDKAVVWIDEKTKDYVVACSWGGDKHAAFCKKGDCEWRQIPPLLGCSDIALKDHKLYIYYEDGSIGISDLKFVTKTAHVQLYPFRFRLGSFSPYDTIWTDYLDWKTNIVITISGDFLMVGCVLKRRDLSWLFRGDQAVILDLGITVQASSDIQGITRNSTYFSGLPSSQKDVFVFNLSSQKVQRLSSSSISSRPFSNARWLFPTSYFTMILFPNIFVFVQL.

Residues 14 to 60 (GVDWSELPEDVIRLVLRRLRLSDFHRARAVCSTWCRVWGDCVSKPNQ) enclose the F-box domain.

This is Putative F-box protein At5g14160 from Arabidopsis thaliana (Mouse-ear cress).